Here is a 549-residue protein sequence, read N- to C-terminus: Cytoplasmic trehalase (549 aa).

Substrate contacts are provided by residues Arg-168, Trp-175 to Asp-176, Asn-212, Arg-221 to Gln-223, Arg-292 to Glu-294, and Gly-324. Catalysis depends on proton donor/acceptor residues Asp-326 and Glu-509. Glu-525 contributes to the substrate binding site.

It belongs to the glycosyl hydrolase 37 family. Monomer.

It is found in the cytoplasm. The enzyme catalyses alpha,alpha-trehalose + H2O = alpha-D-glucose + beta-D-glucose. The protein operates within glycan degradation; trehalose degradation; D-glucose from alpha,alpha-trehalose: step 1/1. In terms of biological role, hydrolyzes trehalose to glucose. Could be involved, in cells returning to low osmolarity conditions, in the utilization of the accumulated cytoplasmic trehalose, which was synthesized in response to high osmolarity. The sequence is that of Cytoplasmic trehalase from Shigella flexneri serotype 5b (strain 8401).